The primary structure comprises 37 residues: Neuropeptide Y1-like conopeptide (37 aa).

The residue at position 37 (phenylalanine 37) is a Phenylalanine amide.

It belongs to the NPY family. Expressed by the venom duct.

It localises to the secreted. In terms of biological role, causes hyperactivity such as jumping, rapid circling and tail flicking, when intraventricularly injected into mice brain. The sequence is that of Neuropeptide Y1-like conopeptide from Conus betulinus (Beech cone).